We begin with the raw amino-acid sequence, 198 residues long: Recombination protein RecR (198 aa).

The segment at 58–73 (CSICGNFTDSDPCAIC) adopts a C4-type zinc-finger fold. A Toprim domain is found at 81-175 (SIICVIEEPK…KVTRIAHGIP (95 aa)).

This sequence belongs to the RecR family.

Functionally, may play a role in DNA repair. It seems to be involved in an RecBC-independent recombinational process of DNA repair. It may act with RecF and RecO. In Clostridium kluyveri (strain NBRC 12016), this protein is Recombination protein RecR.